Consider the following 109-residue polypeptide: Putative pterin-4-alpha-carbinolamine dehydratase (109 aa).

It belongs to the pterin-4-alpha-carbinolamine dehydratase family.

It catalyses the reaction (4aS,6R)-4a-hydroxy-L-erythro-5,6,7,8-tetrahydrobiopterin = (6R)-L-erythro-6,7-dihydrobiopterin + H2O. The chain is Putative pterin-4-alpha-carbinolamine dehydratase from Rickettsia canadensis (strain McKiel).